Here is a 20-residue protein sequence, read N- to C-terminus: Phylloseptin-O1 (20 aa).

Gly-20 bears the Glycine amide mark.

Expressed by the skin glands.

Its subcellular location is the secreted. Functionally, has antiprotozoal activity against T.cruzi. This chain is Phylloseptin-O1 (psn4), found in Pithecopus oreades (Orange-legged leaf frog).